The following is a 187-amino-acid chain: Probable DNA-directed RNA polymerase subunit delta (187 aa).

The region spanning 14–81 (LSMIEVAHAL…GNNVWALRSW (68 aa)) is the HTH HARE-type domain. The tract at residues 96–187 (EIEDEEEEKP…EDDSDDTDED (92 aa)) is disordered. 2 stretches are compositionally biased toward acidic residues: residues 117–149 (IEDE…EDKD) and 157–187 (ELAE…TDED).

This sequence belongs to the RpoE family. RNAP is composed of a core of 2 alpha, a beta and a beta' subunits. The core is associated with a delta subunit and one of several sigma factors.

Participates in both the initiation and recycling phases of transcription. In the presence of the delta subunit, RNAP displays an increased specificity of transcription, a decreased affinity for nucleic acids, and an increased efficiency of RNA synthesis because of enhanced recycling. The polypeptide is Probable DNA-directed RNA polymerase subunit delta (Lactococcus lactis subsp. cremoris (strain SK11)).